Reading from the N-terminus, the 77-residue chain is Pi/alpha-stichotoxin-Hmg5b (77 aa).

A signal peptide spans 1-21 (MDYQRLLFLFAVAMVITTTVA). Residues 22–34 (LPKDTALMDGQLQ) constitute a propeptide that is removed on maturation. 3 cysteine pairs are disulfide-bonded: C40–C73, C42–C66, and C56–C74. M52 bears the Methionine sulfoxide; partial mark.

This sequence belongs to the sea anemone type 3 (BDS) potassium channel toxin family. Post-translationally, toxin occurs in two forms in the mucus, Hmg 1b-2 which is not oxidized and Hmg 1b-2 MetOx which is oxidized at Met-52.

It localises to the secreted. Its subcellular location is the nematocyst. Its function is as follows. The non-oxidized toxin is remarkably non-selective with activity on many different ion channels. Weakly and reversibly inhibits rat and human homomeric ASIC1 (isoform ASIC1a) (IC(50)=4.8 uM, and IC(50)=14.6 uM), and ASIC3 (IC(50)=15.9 uM). Molecular modeling interaction with ASIC1a suggests that this peptide hinders the collapse of acidic pockets and stabilizes nonconducting channels state. It activates several potassium channels including Kv1.1/KCNA1, Kv1.2/KCNA2, and drosophila Shaker IR. It moderately to potently inhibits potassium channels including Kv1.3/KCNA3, Kv1.4/KCNA4, Kv1.5/KCNA5, Kv1.6/KCNA6, Kv2.1/KCNB1, Kv4.2/KCND2, Kv7.1/KCNQ1, Kv7.2/Kv7.3 (KCNQ2/KCNQ3), Kv7.4/KCNQ4, hERG/KCNH2, and C.elegans QKT1. On sodium channels, it moderately to potently inhibits Nav1.1/SCN1A, Nav1.2/SCN2A, Nav1.3/SCN3A, Nav1.4/SCN4A, Nav1.5/SCN5A, Nav1.6/SCN8A, Nav1.7/SCN9A, Nav1.8/SCN10A, and B.germanica BgNav. It also moderately to potently inhibits Cav3.1/CACNA1G, Cav3.2/CACNA1H, and Cav3.3/CACNA1I. Significant shifts in the voltage-current relationship are observed on Kv and Nav, depending on the channel isoform, whereas the toxin does not seem to modulate the voltage-sensor domains of Cav channels, acting mainly as a pore blocker. Does not activate nicotinic acetylcholine receptors (nAChR), but potentiates ACh-elicited current of human alpha-7/CHRNA7 nAChR. Is also able to bind T.californica muscle-type nAChRs. In vivo, causes an excitatory effect in mice behavior. Also shows antihyperalgesic and analgesic activity in the acid-induced muscle pain mice model, and weak anti-inflammatory effect in models of acute local inflammation. In terms of biological role, forms an oxidized toxin derivative (Hmg 1b-2 MetOx). Able to bind T.californica muscle-type nAChRs (alpha-1-beta-1-delta-epsilon (CHRNA1-CHRNB1-CHRND-CHRNE)). The protein is Pi/alpha-stichotoxin-Hmg5b of Heteractis magnifica (Magnificent sea anemone).